The sequence spans 95 residues: Small integral membrane protein 26 (95 aa).

A helical transmembrane segment spans residues 13–35 (MSVVYGIGTWSVLGSLLYYSRTM).

Belongs to the SMIM26 family. Interacts with AGK and SLC25A11. As to expression, detected in kidney (at protein level).

The protein localises to the mitochondrion outer membrane. Its function is as follows. May play a role in cell viability. The polypeptide is Small integral membrane protein 26 (Homo sapiens (Human)).